The chain runs to 117 residues: Protein Wnt-6 (117 aa).

Residue S1 is the site of O-palmitoleoyl serine; by PORCN attachment. A disulfide bridge connects residues C83 and C98. A glycan (N-linked (GlcNAc...) asparagine) is linked at N84.

It belongs to the Wnt family. Post-translationally, palmitoleoylation is required for efficient binding to frizzled receptors. Depalmitoleoylation leads to Wnt signaling pathway inhibition.

The protein resides in the secreted. It localises to the extracellular space. The protein localises to the extracellular matrix. Its function is as follows. Ligand for members of the frizzled family of seven transmembrane receptors. Probable developmental protein. May be a signaling molecule which affects the development of discrete regions of tissues. Is likely to signal over only few cell diameters. The polypeptide is Protein Wnt-6 (WNT-6) (Strongylocentrotus purpuratus (Purple sea urchin)).